We begin with the raw amino-acid sequence, 413 residues long: Imidazolonepropionase (413 aa).

Fe(3+) is bound by residues histidine 79 and histidine 81. Zn(2+) is bound by residues histidine 79 and histidine 81. Arginine 88, tyrosine 151, and histidine 184 together coordinate 4-imidazolone-5-propanoate. Tyrosine 151 serves as a coordination point for N-formimidoyl-L-glutamate. Residue histidine 248 coordinates Fe(3+). Zn(2+) is bound at residue histidine 248. Glutamate 251 is a 4-imidazolone-5-propanoate binding site. A Fe(3+)-binding site is contributed by aspartate 322. Aspartate 322 contributes to the Zn(2+) binding site. Residues asparagine 324 and glycine 326 each coordinate N-formimidoyl-L-glutamate. Serine 327 is a 4-imidazolone-5-propanoate binding site.

It belongs to the metallo-dependent hydrolases superfamily. HutI family. The cofactor is Zn(2+). Requires Fe(3+) as cofactor.

It localises to the cytoplasm. The enzyme catalyses 4-imidazolone-5-propanoate + H2O = N-formimidoyl-L-glutamate. It functions in the pathway amino-acid degradation; L-histidine degradation into L-glutamate; N-formimidoyl-L-glutamate from L-histidine: step 3/3. In terms of biological role, catalyzes the hydrolytic cleavage of the carbon-nitrogen bond in imidazolone-5-propanoate to yield N-formimidoyl-L-glutamate. It is the third step in the universal histidine degradation pathway. This Fusobacterium nucleatum subsp. nucleatum (strain ATCC 25586 / DSM 15643 / BCRC 10681 / CIP 101130 / JCM 8532 / KCTC 2640 / LMG 13131 / VPI 4355) protein is Imidazolonepropionase.